A 347-amino-acid chain; its full sequence is tRNA N6-adenosine threonylcarbamoyltransferase (347 aa).

Fe cation contacts are provided by H111 and H115. Residues 134-138 (LVSGG), D167, G180, and N276 each bind substrate. D304 is a binding site for Fe cation.

It belongs to the KAE1 / TsaD family. Fe(2+) is required as a cofactor.

It is found in the cytoplasm. The catalysed reaction is L-threonylcarbamoyladenylate + adenosine(37) in tRNA = N(6)-L-threonylcarbamoyladenosine(37) in tRNA + AMP + H(+). In terms of biological role, required for the formation of a threonylcarbamoyl group on adenosine at position 37 (t(6)A37) in tRNAs that read codons beginning with adenine. Is involved in the transfer of the threonylcarbamoyl moiety of threonylcarbamoyl-AMP (TC-AMP) to the N6 group of A37, together with TsaE and TsaB. TsaD likely plays a direct catalytic role in this reaction. In Nitrosospira multiformis (strain ATCC 25196 / NCIMB 11849 / C 71), this protein is tRNA N6-adenosine threonylcarbamoyltransferase.